The primary structure comprises 245 residues: Protein canopy homolog 4 (245 aa).

The signal sequence occupies residues 1-27 (MCGLRFIMGPVRLEILLFILAAYGAWA). 3 cysteine pairs are disulfide-bonded: cysteine 44/cysteine 202, cysteine 47/cysteine 190, and cysteine 100/cysteine 162. Residues 207–245 (WTGKEKISDGQEEADDEEEEEEEEITKTSGNPKHDPEDL) are disordered. Residues 209–237 (GKEKISDGQEEADDEEEEEEEEITKTSGN) adopt a coiled-coil conformation. The segment covering 216 to 230 (GQEEADDEEEEEEEE) has biased composition (acidic residues).

The protein belongs to the canopy family. Interacts with TLR4. As to expression, highly expressed in lung, spleen, thymus, and uterus. Moderately expressed in kidney, stomach and placenta. Weakly expressed in brain, heart, liver, small intestine, skeletal muscle and testis.

Its subcellular location is the secreted. Plays a role in the regulation of the cell surface expression of TLR4. The sequence is that of Protein canopy homolog 4 (Cnpy4) from Mus musculus (Mouse).